A 165-amino-acid chain; its full sequence is Xanthine-guanine phosphoribosyltransferase (165 aa).

Residues 41 to 42 (RG) and 98 to 106 (DDLTDTGKT) each bind 5-phospho-alpha-D-ribose 1-diphosphate. Mg(2+) is bound at residue D99. Positions 102 and 145 each coordinate guanine. Xanthine contacts are provided by D102 and I145. Residues 102 to 106 (DTGKT) and 144 to 145 (WI) each bind GMP.

Belongs to the purine/pyrimidine phosphoribosyltransferase family. XGPT subfamily. In terms of assembly, homotetramer. The cofactor is Mg(2+).

Its subcellular location is the cell inner membrane. The catalysed reaction is GMP + diphosphate = guanine + 5-phospho-alpha-D-ribose 1-diphosphate. The enzyme catalyses XMP + diphosphate = xanthine + 5-phospho-alpha-D-ribose 1-diphosphate. It carries out the reaction IMP + diphosphate = hypoxanthine + 5-phospho-alpha-D-ribose 1-diphosphate. It participates in purine metabolism; GMP biosynthesis via salvage pathway; GMP from guanine: step 1/1. The protein operates within purine metabolism; XMP biosynthesis via salvage pathway; XMP from xanthine: step 1/1. Functionally, purine salvage pathway enzyme that catalyzes the transfer of the ribosyl-5-phosphate group from 5-phospho-alpha-D-ribose 1-diphosphate (PRPP) to the N9 position of the 6-oxopurines guanine and xanthine to form the corresponding ribonucleotides GMP (guanosine 5'-monophosphate) and XMP (xanthosine 5'-monophosphate), with the release of PPi. To a lesser extent, also acts on hypoxanthine. This Chelativorans sp. (strain BNC1) protein is Xanthine-guanine phosphoribosyltransferase.